Consider the following 35-residue polypeptide: Photosystem II reaction center protein M (35 aa).

The chain crosses the membrane as a helical span at residues 5 to 25 (ILAFVATALFILIPTAFLLIL).

The protein belongs to the PsbM family. In terms of assembly, PSII is composed of 1 copy each of membrane proteins PsbA, PsbB, PsbC, PsbD, PsbE, PsbF, PsbH, PsbI, PsbJ, PsbK, PsbL, PsbM, PsbT, PsbX, PsbY, PsbZ, Psb30/Ycf12, at least 3 peripheral proteins of the oxygen-evolving complex and a large number of cofactors. It forms dimeric complexes.

The protein localises to the plastid. It localises to the chloroplast thylakoid membrane. In terms of biological role, one of the components of the core complex of photosystem II (PSII). PSII is a light-driven water:plastoquinone oxidoreductase that uses light energy to abstract electrons from H(2)O, generating O(2) and a proton gradient subsequently used for ATP formation. It consists of a core antenna complex that captures photons, and an electron transfer chain that converts photonic excitation into a charge separation. This subunit is found at the monomer-monomer interface. This chain is Photosystem II reaction center protein M, found in Adiantum capillus-veneris (Maidenhair fern).